An 89-amino-acid polypeptide reads, in one-letter code: Large ribosomal subunit protein bL27 (89 aa).

The tract at residues 1-21 is disordered; sequence MAHKKAGGSSRNGRDSQSKRL.

Belongs to the bacterial ribosomal protein bL27 family.

This chain is Large ribosomal subunit protein bL27, found in Rhizobium leguminosarum bv. trifolii (strain WSM2304).